Here is a 60-residue protein sequence, read N- to C-terminus: Large ribosomal subunit protein bL32 (60 aa).

The protein belongs to the bacterial ribosomal protein bL32 family.

The protein is Large ribosomal subunit protein bL32 of Streptococcus gordonii (strain Challis / ATCC 35105 / BCRC 15272 / CH1 / DL1 / V288).